The following is a 131-amino-acid chain: ER membrane protein complex subunit 5 (131 aa).

Residues 1-3 are Cytoplasmic-facing; sequence MAP. The helical transmembrane segment at 4 to 22 threads the bilayer; sequence SLWKGLVGVGLFALAHAAF. Over 23-43 the chain is Lumenal; the sequence is SAAQHRSYMRLTEKEDESLPI. The chain crosses the membrane as a helical span at residues 44–63; the sequence is DIVLQTLLAFAVTCYGIVHI. Topologically, residues 64-131 are cytoplasmic; sequence AGEFKDMDAT…KLRKFDSLRR (68 aa). At S120 the chain carries Phosphoserine.

Belongs to the membrane magnesium transporter (TC 1.A.67) family. Component of the ER membrane protein complex (EMC). In terms of tissue distribution, abundant in heart muscle and kidney with lower levels in liver and brain and very little expression in intestine or colon. In kidney, highest levels in distal convoluted tubule.

It is found in the endoplasmic reticulum membrane. The protein resides in the golgi apparatus membrane. The protein localises to the early endosome membrane. Functionally, part of the endoplasmic reticulum membrane protein complex (EMC) that enables the energy-independent insertion into endoplasmic reticulum membranes of newly synthesized membrane proteins. Preferentially accommodates proteins with transmembrane domains that are weakly hydrophobic or contain destabilizing features such as charged and aromatic residues. Involved in the cotranslational insertion of multi-pass membrane proteins in which stop-transfer membrane-anchor sequences become ER membrane spanning helices. It is also required for the post-translational insertion of tail-anchored/TA proteins in endoplasmic reticulum membranes. By mediating the proper cotranslational insertion of N-terminal transmembrane domains in an N-exo topology, with translocated N-terminus in the lumen of the ER, controls the topology of multi-pass membrane proteins like the G protein-coupled receptors. By regulating the insertion of various proteins in membranes, it is indirectly involved in many cellular processes. May be involved Mg(2+) transport. The sequence is that of ER membrane protein complex subunit 5 from Mus musculus (Mouse).